Consider the following 301-residue polypeptide: MKIAVLSRNPRLYSTRRLVEAGRERGHEMVVIDTLRAYMNIASHKPQIHYRGQPLEGFDAVIPRIGASVTFYGCAVLRQFEMMGVFPLNESVAIARSRDKLRSLQLLSRKGIGLPVTGFAHSPDDVPDLIEMVGGAPLVIKLLEGTQGIGVVLCETEKAAESVLEAFMGLKHNIMVQEYIKEAGGADIRCFVVGDKVIASMKRQAAPGEFRSNLHRGGSASLIKITPEERMTAIRAARVMGLNVAGVDILRSNHGPLVMEVNSSPGLEGIESTTGKDIAGIIIQYLEKNGGPHLARTKGKG.

Positions 104-287 (LQLLSRKGIG…IAGIIIQYLE (184 aa)) constitute an ATP-grasp domain. ATP contacts are provided by residues Lys141, 178–179 (EY), Asp187, and 211–213 (RSN). 3 residues coordinate Mg(2+): Asp248, Glu260, and Asn262. Asp248, Glu260, and Asn262 together coordinate Mn(2+).

The protein belongs to the RimK family. Mg(2+) is required as a cofactor. Requires Mn(2+) as cofactor.

The polypeptide is Probable alpha-L-glutamate ligase (Pseudomonas aeruginosa (strain UCBPP-PA14)).